The chain runs to 140 residues: Small ribosomal subunit protein uS12 (140 aa).

At D102 the chain carries 3-methylthioaspartic acid.

Belongs to the universal ribosomal protein uS12 family. As to quaternary structure, part of the 30S ribosomal subunit. Contacts proteins S8 and S17. May interact with IF1 in the 30S initiation complex.

Functionally, with S4 and S5 plays an important role in translational accuracy. In terms of biological role, interacts with and stabilizes bases of the 16S rRNA that are involved in tRNA selection in the A site and with the mRNA backbone. Located at the interface of the 30S and 50S subunits, it traverses the body of the 30S subunit contacting proteins on the other side and probably holding the rRNA structure together. The combined cluster of proteins S8, S12 and S17 appears to hold together the shoulder and platform of the 30S subunit. This Bacillus cereus (strain G9842) protein is Small ribosomal subunit protein uS12.